The chain runs to 248 residues: Calpain small subunit 2 (248 aa).

Residues Ala-89, Asp-92, Glu-94, Asp-117, Asp-132, Asp-134, Thr-136, Lys-138, Glu-143, Asp-162, Asp-164, Ser-166, and Asp-205 each coordinate Ca(2+). 4 EF-hand domains span residues 119–152 (FSLD…NNIK), 149–184 (NNIK…AGFQ), 185–213 (LNEQ…ISCL), and 214–248 (VRLD…TMYS).

In terms of assembly, heterodimer of a large (catalytic) and a small (regulatory) subunit.

The protein localises to the cytoplasm. It localises to the cell membrane. Its function is as follows. Calcium-regulated non-lysosomal thiol-protease which catalyzes limited proteolysis of substrates involved in cytoskeletal remodeling and signal transduction. This small subunit may act as a tissue-specific chaperone of the large subunit, possibly by helping it fold into its correct conformation for activity. The sequence is that of Calpain small subunit 2 (CAPNS2) from Homo sapiens (Human).